Here is a 351-residue protein sequence, read N- to C-terminus: UDP-N-acetylglucosamine--N-acetylmuramyl-(pentapeptide) pyrophosphoryl-undecaprenol N-acetylglucosamine transferase (351 aa).

UDP-N-acetyl-alpha-D-glucosamine contacts are provided by residues 12–14, N124, R160, S188, I239, 258–263, and Q283; these read TGG and ALTVCE.

It belongs to the glycosyltransferase 28 family. MurG subfamily.

The protein resides in the cell inner membrane. The catalysed reaction is di-trans,octa-cis-undecaprenyl diphospho-N-acetyl-alpha-D-muramoyl-L-alanyl-D-glutamyl-meso-2,6-diaminopimeloyl-D-alanyl-D-alanine + UDP-N-acetyl-alpha-D-glucosamine = di-trans,octa-cis-undecaprenyl diphospho-[N-acetyl-alpha-D-glucosaminyl-(1-&gt;4)]-N-acetyl-alpha-D-muramoyl-L-alanyl-D-glutamyl-meso-2,6-diaminopimeloyl-D-alanyl-D-alanine + UDP + H(+). It participates in cell wall biogenesis; peptidoglycan biosynthesis. Cell wall formation. Catalyzes the transfer of a GlcNAc subunit on undecaprenyl-pyrophosphoryl-MurNAc-pentapeptide (lipid intermediate I) to form undecaprenyl-pyrophosphoryl-MurNAc-(pentapeptide)GlcNAc (lipid intermediate II). The sequence is that of UDP-N-acetylglucosamine--N-acetylmuramyl-(pentapeptide) pyrophosphoryl-undecaprenol N-acetylglucosamine transferase from Actinobacillus pleuropneumoniae serotype 5b (strain L20).